We begin with the raw amino-acid sequence, 567 residues long: Diacylglycerol kinase epsilon (567 aa).

A helical transmembrane segment spans residues 22–42 (LILWTLCSVLLPVFITFWCSL). Phorbol-ester/DAG-type zinc fingers lie at residues 59–108 (KHGW…RFQC) and 124–177 (PHHW…NEKC). In terms of domain architecture, DAGKc spans 215–356 (KQWTPLIILA…LDRWKVQVTN (142 aa)).

Belongs to the eukaryotic diacylglycerol kinase family. Expressed predominantly in testis. Expressed in endothelium, platelets and podocytes (at protein level).

It localises to the membrane. It is found in the cytoplasm. It carries out the reaction a 1,2-diacyl-sn-glycerol + ATP = a 1,2-diacyl-sn-glycero-3-phosphate + ADP + H(+). It catalyses the reaction 1-hexadecanoyl-2-(5Z,8Z,11Z,14Z-eicosatetraenoyl)-sn-glycerol + ATP = 1-hexadecanoyl-2-(5Z,8Z,11Z,14Z-eicosatetraenoyl)-sn-glycero-3-phosphate + ADP + H(+). The enzyme catalyses 1-octadecanoyl-2-(5Z,8Z,11Z,14Z-eicosatetraenoyl)-sn-glycerol + ATP = 1-octadecanoyl-2-(5Z,8Z,11Z,14Z-eicosatetraenoyl)-sn-glycero-3-phosphate + ADP + H(+). The catalysed reaction is 1-eicosanoyl-2-(5Z,8Z,11Z,14Z)-eicosatetraenoyl-sn-glycerol + ATP = 1-eicosanoyl-2-(5Z,8Z,11Z,14Z)-eicosatetraenoyl-sn-glycero-3-phosphate + ADP + H(+). It carries out the reaction 1,2-di-(5Z,8Z,11Z,14Z)-eicosatetraenoyl-sn-glycerol + ATP = 1,2-di-(5Z,8Z,11Z,14Z)-eicosatetraenoyl-sn-glycero-3-phosphate + ADP + H(+). It catalyses the reaction 1-octadecanoyl-2-(9Z,12Z)-octadecadienoyl-sn-glycerol + ATP = 1-octadecanoyl-2-(9Z,12Z-octadecadienoyl)-sn-glycero-3-phosphate + ADP + H(+). The enzyme catalyses 1,2-di-(9Z,12Z-octadecadienoyl)-sn-glycerol + ATP = 1,2-di-(9Z,12Z-octadecadienoyl)-sn-glycero-3-phosphate + ADP + H(+). The catalysed reaction is 1,2-di-(9Z-octadecenoyl)-sn-glycerol + ATP = 1,2-di-(9Z-octadecenoyl)-sn-glycero-3-phosphate + ADP + H(+). Its pathway is lipid metabolism; glycerolipid metabolism. Undergoes competitive inhibition by its own product 1,2-diacyl-sn-glycero-3-phosphate/phosphatidic acid. The strongest inhibition being observed in vitro with 1-octadecanoyl-2-(5Z,8Z,11Z,14Z-eicosatetraenoyl)-sn-glycero-3-phosphate, a major intermediate in the phosphatidylinositol turnover cycle and more generally by diacylglycerols with an arachidonoyl acyl chain at the sn-2 position. In terms of biological role, membrane-bound diacylglycerol kinase that converts diacylglycerol/DAG into phosphatidic acid/phosphatidate/PA and regulates the respective levels of these two bioactive lipids. Thereby, acts as a central switch between the signaling pathways activated by these second messengers with different cellular targets and opposite effects in numerous biological processes. Also plays an important role in the biosynthesis of complex lipids. Displays specificity for diacylglycerol substrates with an arachidonoyl acyl chain at the sn-2 position, with the highest activity toward 1-octadecanoyl-2-(5Z,8Z,11Z,14Z-eicosatetraenoyl)-sn-glycerol the main diacylglycerol intermediate within the phosphatidylinositol turnover cycle. Can also phosphorylate diacylglycerol substrates with a linoleoyl acyl chain at the sn-2 position but much less efficiently. The polypeptide is Diacylglycerol kinase epsilon (DGKE) (Homo sapiens (Human)).